Here is a 613-residue protein sequence, read N- to C-terminus: MSASSLLEQRPKGQANKVQNGAVTQKDTLNDDEFEPYLNAQPRQSNAYTAMSDSYMPSYYSPSIGFTYSLNEAAWSTGGDPPMPYLASYGQLSNGEHHFLPDAMFGQSGALGNNPFLGQHGFNFFPSGIDFPAWGNSSSQGQSTQSSGYSSSYAYAPSTLGGAMIDGQSPFAANEPLNKAVGMNSLDQGMAGLKIGAGDMAPKVVGSGLPGGPLSQVSTAPTMPPASMAPAKTASWADIASKPAKPQPKLKTKGGLGGTNLPPPPIKHNMDIGTWDNKGNMPKPAAPQQTSLPTNGQPPNQSSPQPGATAGGVPQLPLSNGQLVPPTGQLVQHPLPPGGQPGAVPPQLSQGPPASQPSQPTRWVPPRNRANGFGDAAGGPGQSPPNSGMGGITVPAEPHPVLEKLRMVNNYNPKDFDWNPKHGRVFIIKSYSEDDIHRSIKYNIWCSTEHGNKRLDAAYRSLANKGPLYLLFSVNGSGHFCGVAEMRSPVDYNTCAGVWSQDKWKGRFDVRWIFVKDVPNSQLRHIRLENNENKPVTNSRDTQEVPLDKARQVLKIIASYKHTTSIFDDFSHYEKRQEEEESVKKVEVQGSDPYSNNSSRSHYRMQDRQGRVK.

Disordered stretches follow at residues 1 to 43, 215 to 234, and 244 to 396; these read MSAS…AQPR, SQVS…AKTA, and AKPQ…TVPA. Positions 2 to 397 are localization to mRNA processing bodies (P-bodies); that stretch reads SASSLLEQRP…GMGGITVPAE (396 aa). A compositionally biased stretch (polar residues) spans 16-27; sequence NKVQNGAVTQKD. Composition is skewed to low complexity over residues 218 to 234, 295 to 307, and 345 to 360; these read STAP…AKTA, NGQP…PQPG, and PPQL…PSQP. An interaction with m6A-containing mRNAs region spans residues 398-613; the sequence is PHPVLEKLRM…RMQDRQGRVK (216 aa). In terms of domain architecture, YTH spans 423–557; that stretch reads GRVFIIKSYS…DKARQVLKII (135 aa). RNA contacts are provided by residues 429-431, D435, 445-446, N475, W499, and W504; these read KSY and WC. 2 stretches are compositionally biased toward basic and acidic residues: residues 578–587 and 604–613; these read EEEESVKKVE and RMQDRQGRVK. The disordered stretch occupies residues 578–613; sequence EEEESVKKVEVQGSDPYSNNSSRSHYRMQDRQGRVK.

Belongs to the YTHDF family. YTHDF2 subfamily.

Its subcellular location is the cytoplasm. The protein resides in the cytosol. It localises to the P-body. The protein localises to the stress granule. It is found in the nucleus. Specifically recognizes and binds N6-methyladenosine (m6A)-containing RNAs, and regulates their stability. M6A is a modification present at internal sites of mRNAs and some non-coding RNAs and plays a role in mRNA stability and processing. Acts as a regulator of mRNA stability by promoting degradation of m6A-containing mRNAs. The YTHDF paralogs (ythdf1, ythdf2 and ythdf3) share m6A-containing mRNAs targets and act redundantly to mediate mRNA degradation and cellular differentiation. Plays a key role in maternal-to-zygotic transition during early embryonic development, the process during which maternally inherited mRNAs are degraded: acts by binding m6A-containing maternal mRNAs and promoting their degradation. More than one-third of maternal mRNAs can be modified by m6A. Binding to m6A-containing mRNAs results in mRNA degradation. Also involved in hematopoietic stem cells specification by binding to m6A-containing mRNAs, such as notch1a, and promote their degradation. The decreased Notch signaling following notch1a degradation promotes endothelial to hematopoietic transition. Promotes formation of phase-separated membraneless compartments, such as P-bodies or stress granules, by undergoing liquid-liquid phase separation upon binding to mRNAs containing multiple m6A-modified residues: polymethylated mRNAs act as a multivalent scaffold for the binding of YTHDF proteins, juxtaposing their disordered regions and thereby leading to phase separation. The resulting mRNA-YTHDF complexes then partition into different endogenous phase-separated membraneless compartments, such as P-bodies, stress granules or neuronal RNA granules. In Danio rerio (Zebrafish), this protein is YTH domain-containing family protein 2.